The sequence spans 437 residues: Cytochrome b (437 aa).

The chain crosses the membrane as a helical span at residues 45–65 (WIWGIVLAFTLVLQIVTGIVL). The heme b site is built by histidine 97 and histidine 111. The next 9 membrane-spanning stretches (helical) occupy residues 100–120 (GASL…YYGS), 129–149 (WIVG…GYVL), 156–176 (FWGA…GPSI), 194–214 (FFSL…IHIW), 248–268 (FVIK…AVVA), 298–318 (FLPF…VILV), 330–350 (FFGV…PWLD), 365–385 (MWFW…AMPT), and 391–411 (WISL…LPLL). The heme b site is built by histidine 198 and histidine 212.

Belongs to the cytochrome b family. In terms of assembly, the main subunits of complex b-c1 are: cytochrome b, cytochrome c1 and the Rieske protein. Heme b serves as cofactor.

Its subcellular location is the cell membrane. In terms of biological role, component of the ubiquinol-cytochrome c reductase complex (complex III or cytochrome b-c1 complex), which is a respiratory chain that generates an electrochemical potential coupled to ATP synthesis. The polypeptide is Cytochrome b (petB) (Rhodobacter capsulatus (strain ATCC BAA-309 / NBRC 16581 / SB1003)).